The primary structure comprises 239 residues: Increased recombination centers protein 22-2 (239 aa).

The signal sequence occupies residues 1–19; sequence MKLSTIFTAFAATIATVAG. The Lumenal segment spans residues 20-161; it reads YETTGSKQTV…AAVSFFDPRL (142 aa). Residues 162–182 form a helical membrane-spanning segment; sequence IFLELVLLITFAGLIYVGYEI. The Cytoplasmic portion of the chain corresponds to 183–239; that stretch reads WGKQYFKGVAPVKAKKVSAAKASSPVATGPSTTSATGYDTNWIPESHLKQKKTKKVN. A disordered region spans residues 202 to 222; it reads AKASSPVATGPSTTSATGYDT. Residues 211 to 221 show a composition bias toward polar residues; that stretch reads GPSTTSATGYD.

The protein belongs to the IRC22 family.

It localises to the endoplasmic reticulum membrane. Its function is as follows. Is probably involved in a pathway contributing to genomic integrity. The protein is Increased recombination centers protein 22-2 (IRC22-2) of Candida albicans (strain SC5314 / ATCC MYA-2876) (Yeast).